A 456-amino-acid polypeptide reads, in one-letter code: Bifunctional protein GlmU (456 aa).

The pyrophosphorylase stretch occupies residues 1–229 (MLNNAMSVVI…LSEVEGVNNR (229 aa)). UDP-N-acetyl-alpha-D-glucosamine is bound by residues 11–14 (LAAG), Lys-25, Gln-76, 81–82 (GT), 103–105 (YGD), Gly-140, Glu-154, Asn-169, and Asn-227. Asp-105 provides a ligand contact to Mg(2+). Residue Asn-227 coordinates Mg(2+). The tract at residues 230 to 250 (LQLSRLERVYQSEQAEKLLLA) is linker. The N-acetyltransferase stretch occupies residues 251-456 (GVMLRDPARF…EGWRRPVKKK (206 aa)). Arg-333 and Lys-351 together coordinate UDP-N-acetyl-alpha-D-glucosamine. The active-site Proton acceptor is His-363. UDP-N-acetyl-alpha-D-glucosamine is bound by residues Tyr-366 and Asn-377. Acetyl-CoA-binding positions include Ala-380, 386 to 387 (NY), Ser-405, Ala-423, and Arg-440.

In the N-terminal section; belongs to the N-acetylglucosamine-1-phosphate uridyltransferase family. It in the C-terminal section; belongs to the transferase hexapeptide repeat family. In terms of assembly, homotrimer. Mg(2+) is required as a cofactor.

Its subcellular location is the cytoplasm. The catalysed reaction is alpha-D-glucosamine 1-phosphate + acetyl-CoA = N-acetyl-alpha-D-glucosamine 1-phosphate + CoA + H(+). It carries out the reaction N-acetyl-alpha-D-glucosamine 1-phosphate + UTP + H(+) = UDP-N-acetyl-alpha-D-glucosamine + diphosphate. The protein operates within nucleotide-sugar biosynthesis; UDP-N-acetyl-alpha-D-glucosamine biosynthesis; N-acetyl-alpha-D-glucosamine 1-phosphate from alpha-D-glucosamine 6-phosphate (route II): step 2/2. It participates in nucleotide-sugar biosynthesis; UDP-N-acetyl-alpha-D-glucosamine biosynthesis; UDP-N-acetyl-alpha-D-glucosamine from N-acetyl-alpha-D-glucosamine 1-phosphate: step 1/1. Its pathway is bacterial outer membrane biogenesis; LPS lipid A biosynthesis. In terms of biological role, catalyzes the last two sequential reactions in the de novo biosynthetic pathway for UDP-N-acetylglucosamine (UDP-GlcNAc). The C-terminal domain catalyzes the transfer of acetyl group from acetyl coenzyme A to glucosamine-1-phosphate (GlcN-1-P) to produce N-acetylglucosamine-1-phosphate (GlcNAc-1-P), which is converted into UDP-GlcNAc by the transfer of uridine 5-monophosphate (from uridine 5-triphosphate), a reaction catalyzed by the N-terminal domain. The chain is Bifunctional protein GlmU from Shigella boydii serotype 4 (strain Sb227).